Reading from the N-terminus, the 190-residue chain is Hypoxanthine/guanine phosphoribosyltransferase (190 aa).

Belongs to the purine/pyrimidine phosphoribosyltransferase family. Archaeal HPRT subfamily. As to quaternary structure, homodimer.

The protein localises to the cytoplasm. The catalysed reaction is IMP + diphosphate = hypoxanthine + 5-phospho-alpha-D-ribose 1-diphosphate. The enzyme catalyses GMP + diphosphate = guanine + 5-phospho-alpha-D-ribose 1-diphosphate. Its pathway is purine metabolism; IMP biosynthesis via salvage pathway; IMP from hypoxanthine: step 1/1. Functionally, catalyzes a salvage reaction resulting in the formation of IMP that is energically less costly than de novo synthesis. In Methanohalophilus mahii (strain ATCC 35705 / DSM 5219 / SLP), this protein is Hypoxanthine/guanine phosphoribosyltransferase.